Here is a 215-residue protein sequence, read N- to C-terminus: Cytochrome b6 (215 aa).

A helical membrane pass occupies residues 32 to 52 (IFYCLGGITLTCFLVQVATGF). Residue Cys35 coordinates heme c. Heme b is bound by residues His86 and His100. The next 3 membrane-spanning stretches (helical) occupy residues 90-110 (ASMMVLMMILHVFRVYLTGGF), 116-136 (LTWVTGVVLAVLTASFGVTGY), and 186-206 (LHTFVLPLLTAVFMLMHFPMI). Heme b contacts are provided by His187 and His202.

Belongs to the cytochrome b family. PetB subfamily. In terms of assembly, the 4 large subunits of the cytochrome b6-f complex are cytochrome b6, subunit IV (17 kDa polypeptide, PetD), cytochrome f and the Rieske protein, while the 4 small subunits are PetG, PetL, PetM and PetN. The complex functions as a dimer. It depends on heme b as a cofactor. Requires heme c as cofactor.

Its subcellular location is the plastid. It localises to the chloroplast thylakoid membrane. In terms of biological role, component of the cytochrome b6-f complex, which mediates electron transfer between photosystem II (PSII) and photosystem I (PSI), cyclic electron flow around PSI, and state transitions. This chain is Cytochrome b6, found in Saccharum hybrid (Sugarcane).